The chain runs to 852 residues: Vacuolar protein sorting-associated protein 16 homolog (852 aa).

It belongs to the VPS16 family. As to quaternary structure, probable core component of at least two putative endosomal tethering complexes, the homotypic fusion and vacuole protein sorting (HOPS) complex and the class C core vacuole/endosome tethering (CORVET) complex. Their common core is composed of the class C Vps proteins vps-11, vps-16 and vps-18, which in HOPS further associates with vps-33.1, vps-39 and vps-41 and in CORVET with vps-8 and vps-33.2.

Its subcellular location is the late endosome membrane. It is found in the lysosome membrane. Plays a role in vesicle-mediated protein trafficking to lysosomal compartments including the endocytic membrane transport pathways. Believed to act as a core component of the putative HOPS and CORVET endosomal tethering complexes which are proposed to be involved in the rab-5-to-rab-7 endosome conversion probably implicating sand-1, and via binding SNAREs and SNARE complexes to mediate tethering and docking events during SNARE-mediated membrane fusion. The HOPS complex is proposed to be recruited to rab-7 on the late endosomal membrane and to regulate late endocytic, phagocytic and autophagic traffic towards lysosomes. Within the HOPS complex, contributes to the normal development of gut granules in the adult intestine. The CORVET complex is proposed to function as a rab-5 effector to mediate early endosome fusion probably in specific endosome subpopulations. Required for recruitment of vps-33.1 to the HOPS complex. Required for fusion of endosomes and autophagosomes with lysosomes; the function is dependent on its association with vps-33.1 but not vps-33.2. This Caenorhabditis elegans protein is Vacuolar protein sorting-associated protein 16 homolog.